The chain runs to 314 residues: PDCD10 and GCKIII kinases-associated protein 1 (314 aa).

Serine 30 bears the Phosphoserine mark. The disordered stretch occupies residues 36–142; the sequence is DDTDKLKGKW…TQPFLEGGGT (107 aa). Threonine 106 is subject to Phosphothreonine. Residues 107–116 are compositionally biased toward polar residues; the sequence is PQPTGNSSPT. Phosphoserine is present on residues serine 238 and serine 241. Residues 267–291 form a disordered region; that stretch reads VDSGNRQEDTHGSDGDGDGEIVDED. The segment covering 271–280 has biased composition (basic and acidic residues); sequence NRQEDTHGSD. Acidic residues predominate over residues 281 to 291; that stretch reads GDGDGEIVDED.

In terms of assembly, interacts with KEAP1; this interaction prevents the ubiquitination of KEAP1 by TRIM25, thus protecting KEAP1 from degradation. Found in association with PDCD10 and members of the STE20 kinases, such as STK24, STK25 and STK26.

It is found in the cell membrane. Acts as a tumor suppressor. Acts as a tumor suppressor for colorectal cancer cell proliferation by targeting KEAP1/USP17/ELK1/CDK6 axis. The polypeptide is PDCD10 and GCKIII kinases-associated protein 1 (Homo sapiens (Human)).